A 171-amino-acid polypeptide reads, in one-letter code: Calcium channel flower homolog (171 aa).

The Cytoplasmic segment spans residues 1 to 31; sequence MSGSGAAGAAAGPAPPAQEEGMTWWYRWLCR. Residues 32–52 form a helical membrane-spanning segment; that stretch reads LAGVLGAVSCAISGLFNCVTI. At 53–56 the chain is on the extracellular side; sequence HPLN. The helical transmembrane segment at 57–77 threads the bilayer; the sequence is IAAGVWMIMNAFILLLCEAPF. The Cytoplasmic segment spans residues 78-101; the sequence is CCQFVEFANTVAEKVDRLRSWQKA. A helical transmembrane segment spans residues 102-122; sequence VFYCGMAIVPIVMSLTLTTLL. Residues 123–124 lie on the Extracellular side of the membrane; it reads GN. Residues 125 to 141 form a helical membrane-spanning segment; it reads AIAFATGVLYGLSALGK. Residues 142–171 are Cytoplasmic-facing; that stretch reads KGDAISYARIQQQRQQADEEKLAETFEGEL.

This sequence belongs to the calcium channel flower family. In terms of assembly, interacts with adaptor protein complex 2 (AP-2). In terms of tissue distribution, expressed in neurons in the brain (at protein level). Expressed in neuroblastoma cell lines (at protein level). Expressed in cytotoxic T-lymphoocytes (at protein level). Low levels of expression in various tissues including the brain, eye, heart, liver and colon. Expression in the heart is at slightly higher levels than isoform 3. Expressed in skin cells. As to expression, very low levels of expression in the brain, liver and eye. Detected at very low levels of expression in skin cells. In terms of tissue distribution, expressed in various tissues, with highest levels of expression in the brain and eye. Expressed in skin cells. Low levels of expression in the liver, colon, heart and spleen. Barely detected in the brain and liver.

It localises to the cell membrane. Its subcellular location is the vesicle. Functionally, transmembrane protein which mediates synaptic endocytosis and fitness-based cell culling. In response to different stimulus strengths, controls two major modes of synaptic vesicle (SV) retrieval in hippocampal neurons; Clathrin-mediated endocytosis (CME) in response to mild stimulation and activity-dependent bulk endocytosis (ADBE) in response to strong stimulation. In cytotoxic T-lymphoocytes (CTLs) facilitates calcium-dependent endocytosis of cytotoxic granules (CGs) at the immuno synapse. Different isoforms work as fitness fingerprints in 'loser' and 'winner' cells and thereby mediate win/lose decisions as part of the cell competition process. This is Calcium channel flower homolog (Cacfd1) from Mus musculus (Mouse).